We begin with the raw amino-acid sequence, 111 residues long: uncharacterized protein (111 aa).

The next 2 helical transmembrane spans lie at 45–65 (AFLI…LLVI) and 91–111 (LPAG…ILHI).

The protein resides in the cell membrane. This is an uncharacterized protein from Methanothermobacter thermautotrophicus (strain ATCC 29096 / DSM 1053 / JCM 10044 / NBRC 100330 / Delta H) (Methanobacterium thermoautotrophicum).